The following is a 218-amino-acid chain: MAEISRIQYEMEYTEGISQRMRVPEKLKVAPPNADLEQGFQEGVPNASVIMQVPERIVVAGNNEDVSFSRPADLDLIQSTPFKSLALKTPPRVLTLSERPLDFLDLERPPTTPQNEEIRAVGRVKRERSMSENAVRQNGQLVRNDSLYGISNIDTTTEGTSDDLTVVDAASLRRQIIKLNRRLQLLEEENKERAKREMVMYSITVAFWLLNSWLWFRR.

The Cytoplasmic segment spans residues 1-198; sequence MAEISRIQYE…ENKERAKREM (198 aa). T89 is subject to Phosphothreonine. 4 positions are modified to phosphoserine: S129, S131, S146, and S171. Positions 167–198 form a coiled coil; the sequence is VDAASLRRQIIKLNRRLQLLEEENKERAKREM. A helical; Anchor for type IV membrane protein membrane pass occupies residues 199–216; it reads VMYSITVAFWLLNSWLWF. The Mitochondrial intermembrane portion of the chain corresponds to 217–218; sequence RR.

This sequence belongs to the Tango11 family. In terms of assembly, homodimer. Interacts with DNM1L. Interacts with C11orf65/MFI; the interaction inhibits MFF interaction with DNM1L.

It localises to the mitochondrion outer membrane. The protein resides in the peroxisome. It is found in the cytoplasmic vesicle. The protein localises to the secretory vesicle. Its subcellular location is the synaptic vesicle. In terms of biological role, plays a role in mitochondrial and peroxisomal fission. Promotes the recruitment and association of the fission mediator dynamin-related protein 1 (DNM1L) to the mitochondrial surface. May be involved in regulation of synaptic vesicle membrane dynamics by recruitment of DNM1L to clathrin-containing vesicles. The polypeptide is Mitochondrial fission factor (MFF) (Pongo abelii (Sumatran orangutan)).